A 1561-amino-acid chain; its full sequence is ABC-type transporter phomO' (1561 aa).

A run of 7 helical transmembrane segments spans residues 34–54 (LYFE…LLAA), 110–130 (CTAG…CTTV), 139–159 (SVPA…LAHF), 172–192 (SSSL…APLV), 202–222 (GSAL…LIAV), 314–334 (LGLY…FTLA), and 358–378 (GLIG…GWYW). Positions 326–599 (LCLAGFTLAQ…LLQIIPSFGA (274 aa)) constitute an ABC transmembrane type-1 1 domain. A glycan (N-linked (GlcNAc...) asparagine) is linked at asparagine 384. Transmembrane regions (helical) follow at residues 428–448 (LAYA…TWML), 452–472 (VGPP…TSTY), 535–555 (LIVG…VLVF), and 577–597 (LIWI…IPSF). The 227-residue stretch at 645-871 (IHNSSFSYTD…VEDENGDVDN (227 aa)) folds into the ABC transporter 1 domain. A glycan (N-linked (GlcNAc...) asparagine) is linked at asparagine 647. Residue 678 to 685 (GPAGCGKS) coordinates ATP. Asparagine 721 carries an N-linked (GlcNAc...) asparagine glycan. The disordered stretch occupies residues 853–899 (YQFPPSQADVEDENGDVDNGAENTRPRESSHTTEAQSGPPEPKSKPT). Helical transmembrane passes span 913–933 (SIGF…AFCL), 969–989 (VLPL…IVPL), 1037–1054 (LFNT…VILI), and 1147–1167 (LVLN…AVGL). One can recognise an ABC transmembrane type-1 2 domain in the interval 920 to 1209 (VLFIGGGIIF…LLTAWTSLET (290 aa)). N-linked (GlcNAc...) asparagine glycosylation occurs at asparagine 1189. Positions 1229-1238 (DVLVRPDSLD) are enriched in basic and acidic residues. The segment at 1229-1298 (DVLVRPDSLD…DVAADGEKHE (70 aa)) is disordered. Residues 1269–1280 (YDDDDESDENTD) are compositionally biased toward acidic residues. The region spanning 1297–1545 (HEATTITTTS…SDIFAFFGRS (249 aa)) is the ABC transporter 2 domain. Residue 1333-1340 (GRTGSGKS) coordinates ATP. The N-linked (GlcNAc...) asparagine glycan is linked to asparagine 1496.

This sequence belongs to the ABC transporter superfamily. ABCC family. Conjugate transporter (TC 3.A.1.208) subfamily.

The protein resides in the membrane. Its function is as follows. ABC-type transporter; part of the gene cluster that mediates the biosynthesis of the phomopsins, a group of hexapeptide mycotoxins which infects lupins and causes lupinosis disease in livestock. The protein is ABC-type transporter phomO' of Diaporthe leptostromiformis (Lupinosis disease fungus).